Reading from the N-terminus, the 339-residue chain is DNA-directed RNA polymerase subunit alpha (339 aa).

The segment at 1–233 is alpha N-terminal domain (alpha-NTD); that stretch reads MVREEVAGST…DLFLPFLHAE (233 aa). Residues 264–339 are alpha C-terminal domain (alpha-CTD); sequence KKGIPLNCIF…IDLLKNKLSF (76 aa).

The protein belongs to the RNA polymerase alpha chain family. As to quaternary structure, in plastids the minimal PEP RNA polymerase catalytic core is composed of four subunits: alpha, beta, beta', and beta''. When a (nuclear-encoded) sigma factor is associated with the core the holoenzyme is formed, which can initiate transcription.

It localises to the plastid. The protein resides in the chloroplast. The catalysed reaction is RNA(n) + a ribonucleoside 5'-triphosphate = RNA(n+1) + diphosphate. Functionally, DNA-dependent RNA polymerase catalyzes the transcription of DNA into RNA using the four ribonucleoside triphosphates as substrates. In Secale strictum (Mountain rye), this protein is DNA-directed RNA polymerase subunit alpha.